A 381-amino-acid chain; its full sequence is Succinate--CoA ligase [ADP-forming] subunit beta (381 aa).

Positions 9 to 236 (KELLRVAGVP…ESSEAPSEVD (228 aa)) constitute an ATP-grasp domain. ATP is bound by residues lysine 45, 52–54 (GRG), alanine 94, and glutamate 99. Residues asparagine 191 and aspartate 205 each coordinate Mg(2+). Residues asparagine 256 and 313-315 (GIT) each bind substrate.

The protein belongs to the succinate/malate CoA ligase beta subunit family. Heterotetramer of two alpha and two beta subunits. Mg(2+) serves as cofactor.

The enzyme catalyses succinate + ATP + CoA = succinyl-CoA + ADP + phosphate. It catalyses the reaction GTP + succinate + CoA = succinyl-CoA + GDP + phosphate. It functions in the pathway carbohydrate metabolism; tricarboxylic acid cycle; succinate from succinyl-CoA (ligase route): step 1/1. Succinyl-CoA synthetase functions in the citric acid cycle (TCA), coupling the hydrolysis of succinyl-CoA to the synthesis of either ATP or GTP and thus represents the only step of substrate-level phosphorylation in the TCA. The beta subunit provides nucleotide specificity of the enzyme and binds the substrate succinate, while the binding sites for coenzyme A and phosphate are found in the alpha subunit. The sequence is that of Succinate--CoA ligase [ADP-forming] subunit beta from Gemmatimonas aurantiaca (strain DSM 14586 / JCM 11422 / NBRC 100505 / T-27).